Reading from the N-terminus, the 183-residue chain is uncharacterized protein (183 aa).

Belongs to the isochorismatase family.

This is an uncharacterized protein from Bacillus subtilis (strain 168).